A 397-amino-acid chain; its full sequence is Elongation factor Tu (397 aa).

Residues 10–206 (KPHVNIGTIG…AVDDSIPEPQ (197 aa)) enclose the tr-type G domain. Positions 19–26 (GHIDHGKT) are G1. 19–26 (GHIDHGKT) serves as a coordination point for GTP. Thr-26 provides a ligand contact to Mg(2+). Residues 62–66 (GITIS) are G2. The interval 83 to 86 (DCPG) is G3. Residues 83–87 (DCPGH) and 138–141 (NKAD) contribute to the GTP site. The segment at 138–141 (NKAD) is G4. A G5 region spans residues 176–178 (SAL).

The protein belongs to the TRAFAC class translation factor GTPase superfamily. Classic translation factor GTPase family. EF-Tu/EF-1A subfamily. In terms of assembly, monomer.

Its subcellular location is the cytoplasm. It catalyses the reaction GTP + H2O = GDP + phosphate + H(+). In terms of biological role, GTP hydrolase that promotes the GTP-dependent binding of aminoacyl-tRNA to the A-site of ribosomes during protein biosynthesis. In Frankia alni (strain DSM 45986 / CECT 9034 / ACN14a), this protein is Elongation factor Tu.